Reading from the N-terminus, the 315-residue chain is Ribosomal RNA small subunit methyltransferase H (315 aa).

Residues 35–37 (AGH), aspartate 55, phenylalanine 84, aspartate 105, and glutamine 112 each bind S-adenosyl-L-methionine.

This sequence belongs to the methyltransferase superfamily. RsmH family.

Its subcellular location is the cytoplasm. The catalysed reaction is cytidine(1402) in 16S rRNA + S-adenosyl-L-methionine = N(4)-methylcytidine(1402) in 16S rRNA + S-adenosyl-L-homocysteine + H(+). Specifically methylates the N4 position of cytidine in position 1402 (C1402) of 16S rRNA. In Streptococcus agalactiae serotype Ia (strain ATCC 27591 / A909 / CDC SS700), this protein is Ribosomal RNA small subunit methyltransferase H.